The primary structure comprises 32 residues: Hainantoxin F8-35.23 (32 aa).

Expressed by the venom gland.

Its subcellular location is the secreted. The chain is Hainantoxin F8-35.23 from Cyriopagopus hainanus (Chinese bird spider).